A 247-amino-acid polypeptide reads, in one-letter code: UPF0659 protein C216.03 (247 aa).

Belongs to the UPF0659 family.

The protein resides in the cytoplasm. Its subcellular location is the nucleus. In Schizosaccharomyces pombe (strain 972 / ATCC 24843) (Fission yeast), this protein is UPF0659 protein C216.03.